Here is a 449-residue protein sequence, read N- to C-terminus: Glucose-6-phosphate isomerase (449 aa).

A Phosphothreonine modification is found at T38. E290 acts as the Proton donor in catalysis. Residues H311 and K425 contribute to the active site.

It belongs to the GPI family.

The protein localises to the cytoplasm. It catalyses the reaction alpha-D-glucose 6-phosphate = beta-D-fructose 6-phosphate. Its pathway is carbohydrate biosynthesis; gluconeogenesis. The protein operates within carbohydrate degradation; glycolysis; D-glyceraldehyde 3-phosphate and glycerone phosphate from D-glucose: step 2/4. In terms of biological role, catalyzes the reversible isomerization of glucose-6-phosphate to fructose-6-phosphate. The sequence is that of Glucose-6-phosphate isomerase from Geobacillus thermodenitrificans (strain NG80-2).